A 307-amino-acid polypeptide reads, in one-letter code: Exosome complex component RRP45A (307 aa).

This sequence belongs to the RNase PH family. In terms of tissue distribution, expressed in roots, leaves, stems, buds and siliques.

The protein localises to the cytoplasm. It is found in the nucleus. In terms of biological role, probable 3'-&gt;5' exoribonuclease involved in the regulation of cuticular wax biosynthesis. Can perform exosomal functions and partially complement the yeast rrp45 null mutant. The sequence is that of Exosome complex component RRP45A from Arabidopsis thaliana (Mouse-ear cress).